Consider the following 327-residue polypeptide: GTPase Obg (327 aa).

Residues 2–160 (HTFKDSLNIT…LDLRLELVLI (159 aa)) form the Obg domain. The region spanning 161–326 (ADIGLVGLPN…LVNELFALSR (166 aa)) is the OBG-type G domain. GTP is bound by residues 167–174 (GLPNAGKS), 192–196 (FTTKV), 213–216 (DVPG), 280–283 (NKLD), and 307–309 (SIY). Ser-174 and Thr-194 together coordinate Mg(2+).

It belongs to the TRAFAC class OBG-HflX-like GTPase superfamily. OBG GTPase family. As to quaternary structure, monomer. Requires Mg(2+) as cofactor.

The protein resides in the cytoplasm. Functionally, an essential GTPase which binds GTP, GDP and possibly (p)ppGpp with moderate affinity, with high nucleotide exchange rates and a fairly low GTP hydrolysis rate. Plays a role in control of the cell cycle, stress response, ribosome biogenesis and in those bacteria that undergo differentiation, in morphogenesis control. This Borrelia turicatae (strain 91E135) protein is GTPase Obg.